Here is a 415-residue protein sequence, read N- to C-terminus: Methylmalonic aciduria type A homolog, mitochondrial (415 aa).

Residues 1–62 (MTISTLLLSP…LLSDGFRRTL (62 aa)) constitute a mitochondrion transit peptide. GTP is bound by residues 147–155 (GPPGAGKST), Asp-289, and 325–327 (SAR).

This sequence belongs to the SIMIBI class G3E GTPase family. ArgK/MeaB subfamily. Homodimer. Interacts with MMUT (the apoenzyme form); the interaction is GTP dependent.

The protein localises to the mitochondrion. Its subcellular location is the cytoplasm. It catalyses the reaction GTP + H2O = GDP + phosphate + H(+). GTPase activity is stimulated by MMUT. Its function is as follows. GTPase, binds and hydrolyzes GTP. Involved in intracellular vitamin B12 metabolism, mediates the transport of cobalamin (Cbl) into mitochondria for the final steps of adenosylcobalamin (AdoCbl) synthesis. Functions as a G-protein chaperone that assists AdoCbl cofactor delivery from MMAB to the methylmalonyl-CoA mutase (MMUT). Plays a dual role as both a protectase and a reactivase for MMUT. Protects MMUT from progressive inactivation by oxidation by decreasing the rate of the formation of the oxidized inactive cofactor hydroxocobalamin (OH2Cbl). Additionally acts a reactivase by promoting the replacement of OH2Cbl by the active cofactor AdoCbl, restoring the activity of MMUT in the presence and hydrolysis of GTP. In Mus musculus (Mouse), this protein is Methylmalonic aciduria type A homolog, mitochondrial.